The chain runs to 412 residues: NAD-dependent dihydropyrimidine dehydrogenase subunit PreT (412 aa).

Residue Glu286 coordinates NAD(+).

This sequence belongs to the NADH dehydrogenase family. In terms of assembly, heterotetramer of 2 PreA and 2 PreT subunits.

It catalyses the reaction 5,6-dihydrouracil + NAD(+) = uracil + NADH + H(+). The enzyme catalyses 5,6-dihydrothymine + NAD(+) = thymine + NADH + H(+). Involved in pyrimidine base degradation. Catalyzes physiologically the reduction of uracil to 5,6-dihydrouracil (DHU) by using NADH as a specific cosubstrate. It also catalyzes the reverse reaction and the reduction of thymine to 5,6-dihydrothymine (DHT). In Escherichia coli (strain K12), this protein is NAD-dependent dihydropyrimidine dehydrogenase subunit PreT (preT).